A 205-amino-acid chain; its full sequence is Ras-related protein Rab-1A (205 aa).

An N-acetylserine modification is found at S2. Residues S20, G21, G23, K24, S25, C26, E38, and T43 each coordinate GTP. S25 lines the Mg(2+) pocket. The short motif at 34 to 48 (DTYTESYISTIGVDF) is the Switch 1 element. T43 contacts Mg(2+). Residues K49 and K61 each participate in a glycyl lysine isopeptide (Lys-Gly) (interchain with G-Cter in ubiquitin) cross-link. D66 is a Mg(2+) binding site. The Switch 2 signature appears at 66-83 (DTAGQERFRTITSSYYRG). GTP is bound by residues G69, N124, K125, D127, A155, and K156. The disordered stretch occupies residues 178–205 (PGATAGGAEKSNVKIQSTPVKQSGGGCC). S194 carries the phosphoserine modification. S-geranylgeranyl cysteine attachment occurs at residues C204 and C205.

It belongs to the small GTPase superfamily. Rab family. As to quaternary structure, may interact with YIPF5. Interacts with C9orf72; the interaction mediates recruitment of RAB1A to the ATG1/ULK1 kinase complex. Interacts with GDI1; this promotes dissociation from membranes. Requires Mg(2+) as cofactor. Post-translationally, phosphorylated by CDK1 kinase during mitosis. In terms of processing, ubiquitinated via 'Lys-11'-linked ubiquitination on Lys-49 and Lys-61; impairing the recruitment of guanosine diphosphate (GDP) dissociation inhibitor 1/GDI1.

The protein localises to the golgi apparatus. Its subcellular location is the endoplasmic reticulum. It is found in the early endosome. The protein resides in the cytoplasm. It localises to the cytosol. The protein localises to the membrane. Its subcellular location is the melanosome. It catalyses the reaction GTP + H2O = GDP + phosphate + H(+). Regulated by guanine nucleotide exchange factors (GEFs) which promote the exchange of bound GDP for free GTP. Regulated by GTPase activating proteins (GAPs) which increase the GTP hydrolysis activity. Inhibited by GDP dissociation inhibitors (GDIs). Its function is as follows. The small GTPases Rab are key regulators of intracellular membrane trafficking, from the formation of transport vesicles to their fusion with membranes. Rabs cycle between an inactive GDP-bound form and an active GTP-bound form that is able to recruit to membranes different sets of downstream effectors directly responsible for vesicle formation, movement, tethering and fusion. RAB1A regulates vesicular protein transport from the endoplasmic reticulum (ER) to the Golgi compartment and on to the cell surface, and plays a role in IL-8 and growth hormone secretion. Required to modulate the compacted morphology of the Golgi. Regulates the level of CASR present at the cell membrane. Plays a role in cell adhesion and cell migration, via its role in protein trafficking. Plays a role in autophagosome assembly and cellular defense reactions against pathogenic bacteria. Plays a role in microtubule-dependent protein transport by early endosomes and in anterograde melanosome transport. In Canis lupus familiaris (Dog), this protein is Ras-related protein Rab-1A (RAB1A).